We begin with the raw amino-acid sequence, 510 residues long: RNA-splicing ligase RtcB homolog (510 aa).

Mn(2+) is bound by residues Asp-124, Cys-127, His-232, His-264, and His-358. 231-235 (NHYAE) contributes to the GMP binding site. GMP contacts are provided by residues 358–359 (HN), 407–410 (GGTM), Ser-414, 433–436 (HGAG), and Lys-509. The active-site GMP-histidine intermediate is His-433.

It belongs to the RtcB family. Catalytic component of the tRNA-splicing ligase complex. It depends on Mn(2+) as a cofactor.

The catalysed reaction is a 3'-end 3'-phospho-ribonucleotide-RNA + a 5'-end dephospho-ribonucleoside-RNA + GTP = a ribonucleotidyl-ribonucleotide-RNA + GMP + diphosphate. The enzyme catalyses a 3'-end 2',3'-cyclophospho-ribonucleotide-RNA + a 5'-end dephospho-ribonucleoside-RNA + GTP + H2O = a ribonucleotidyl-ribonucleotide-RNA + GMP + diphosphate + H(+). Functionally, catalytic subunit of the tRNA-splicing ligase complex that acts by directly joining spliced tRNA halves to mature-sized tRNAs by incorporating the precursor-derived splice junction phosphate into the mature tRNA as a canonical 3',5'-phosphodiester. May act as an RNA ligase with broad substrate specificity, and may function toward other RNAs. The protein is RNA-splicing ligase RtcB homolog of Trichoplax adhaerens (Trichoplax reptans).